A 622-amino-acid polypeptide reads, in one-letter code: MSRQTTSVGSSCLDLWREKNDRLVRQAKVAQNSGLTLRRQQLAQDALEGLRGLLHSLQGLPAAVPVLPLELTVTCNFIILRASLAQGFTEDQAQDIQRSLERVLETQEQQGPRLEQGLRELWDSVLRASCLLPELLSALHRLVGLQAALWLSADRLGDLALLLETLNGSQSGASKDLLLLLKTWSPPAEELDAPLTLQDAQGLKDVLLTAFAYRQGLQELITGNPDKALSSLHEAASGLCPRPVLVQVYTALGSCHRKMGNPQRALLYLVAALKEGSAWGPPLLEASRLYQQLGDTTAELESLELLVEALNVPCSSKAPQFLIEVELLLPPPDLASPLHCGTQSQTKHILASRCLQTGRAGDAAEHYLDLLALLLDSSEPRFSPPPSPPGPCMPEVFLEAAVALIQAGRAQDALTLCEELLSRTSSLLPKMSRLWEDARKGTKELPYCPLWVSATHLLQGQAWVQLGAQKVAISEFSRCLELLFRATPEEKEQGAAFNCEQGCKSDAALQQLRAAALISRGLEWVASGQDTKALQDFLLSVQMCPGNRDTYFHLLQTLKRLDRRDEATALWWRLEAQTKGSHEDALWSLPLYLESYLSWIRPSDRDAFLEEFRTSLPKSCDL.

Ser7 carries the phosphoserine modification. 4 TPR repeats span residues 246 to 279, 344 to 377, 453 to 486, and 514 to 547; these read VQVY…GSAW, SQTK…LLDS, SATH…LFRA, and AAAL…CPGN.

Belongs to the multisubunit FA complex composed of FANCA, FANCB, FANCC, FANCE, FANCF, FANCG, FANCL/PHF9 and FANCM. The complex is not found in FA patients. In complex with FANCF, FANCA and FANCL, but not with FANCC, nor FANCE, interacts with HES1; this interaction may be essential for the stability and nuclear localization of FA core complex proteins. The complex with FANCC and FANCG may also include EIF2AK2 and HSP70. When phosphorylated at Ser-7, forms a complex with BRCA2, FANCD2 and XRCC3. Highly expressed in testis and thymus. Found in lymphoblasts.

The protein localises to the nucleus. It localises to the cytoplasm. DNA repair protein that may operate in a postreplication repair or a cell cycle checkpoint function. May be implicated in interstrand DNA cross-link repair and in the maintenance of normal chromosome stability. Candidate tumor suppressor gene. The sequence is that of Fanconi anemia group G protein (FANCG) from Homo sapiens (Human).